Here is a 442-residue protein sequence, read N- to C-terminus: GTPase HflX (442 aa).

Positions 186-362 (VLVALAGYTN…ALNRVVLKLP (177 aa)) constitute a Hflx-type G domain. Residues 192 to 199 (GYTNAGKS), 217 to 221 (FTTLD), 238 to 241 (DTVG), 306 to 309 (NKID), and 341 to 343 (SAR) contribute to the GTP site. The Mg(2+) site is built by Ser199 and Thr219.

This sequence belongs to the TRAFAC class OBG-HflX-like GTPase superfamily. HflX GTPase family. In terms of assembly, monomer. Associates with the 50S ribosomal subunit. It depends on Mg(2+) as a cofactor.

It localises to the cytoplasm. GTPase that associates with the 50S ribosomal subunit and may have a role during protein synthesis or ribosome biogenesis. This is GTPase HflX from Thermococcus kodakarensis (strain ATCC BAA-918 / JCM 12380 / KOD1) (Pyrococcus kodakaraensis (strain KOD1)).